Consider the following 376-residue polypeptide: Alanine racemase (376 aa).

Lysine 44 (proton acceptor; specific for D-alanine) is an active-site residue. At lysine 44 the chain carries N6-(pyridoxal phosphate)lysine. Position 139 (arginine 139) interacts with substrate. Tyrosine 271 serves as the catalytic Proton acceptor; specific for L-alanine. Methionine 319 is a substrate binding site.

The protein belongs to the alanine racemase family. Requires pyridoxal 5'-phosphate as cofactor.

It carries out the reaction L-alanine = D-alanine. It participates in amino-acid biosynthesis; D-alanine biosynthesis; D-alanine from L-alanine: step 1/1. Functionally, catalyzes the interconversion of L-alanine and D-alanine. May also act on other amino acids. The sequence is that of Alanine racemase (alr) from Bordetella petrii (strain ATCC BAA-461 / DSM 12804 / CCUG 43448).